The chain runs to 540 residues: Zinc finger CCCH domain-containing protein 46 (540 aa).

The C3H1-type zinc finger occupies 148 to 175 (GFGGVPCSYFARGFCKNGASCRFVHSDG). The region spanning 258–334 (RQIYLTFPAD…RVLVKPYKEK (77 aa)) is the RRM domain. Composition is skewed to basic and acidic residues over residues 337 to 351 (VPDK…EREL) and 436 to 450 (EYDG…SKEG). 3 disordered regions span residues 337–365 (VPDK…DVLG), 436–469 (EYDG…LPDS), and 490–514 (SDLW…SFNS). S451 is modified (phosphoserine). Residues 490–511 (SDLWSPSSDNDDNSTPSTLSDS) are compositionally biased toward low complexity.

In terms of biological role, possesses RNA-binding and ribonuclease activities in vitro. This chain is Zinc finger CCCH domain-containing protein 46, found in Arabidopsis thaliana (Mouse-ear cress).